The following is an 806-amino-acid chain: Leucine--tRNA ligase (806 aa).

The 'HIGH' region signature appears at 38 to 48; it reads PYPSGEIHMGH. The 'KMSKS' region motif lies at 572-576; it reads KMSKS. Residue Lys-575 coordinates ATP.

This sequence belongs to the class-I aminoacyl-tRNA synthetase family.

It localises to the cytoplasm. It carries out the reaction tRNA(Leu) + L-leucine + ATP = L-leucyl-tRNA(Leu) + AMP + diphosphate. The polypeptide is Leucine--tRNA ligase (Helicobacter acinonychis (strain Sheeba)).